The chain runs to 242 residues: ATP-dependent dethiobiotin synthetase BioD (242 aa).

Residue 12–17 (EVGKTV) participates in ATP binding. Thr16 serves as a coordination point for Mg(2+). Lys37 is an active-site residue. Substrate is bound at residue Ser41. ATP-binding positions include Asp51 and 112-115 (EGAG). Positions 51 and 112 each coordinate Mg(2+).

The protein belongs to the dethiobiotin synthetase family. Homodimer. The cofactor is Mg(2+).

It is found in the cytoplasm. It catalyses the reaction (7R,8S)-7,8-diammoniononanoate + CO2 + ATP = (4R,5S)-dethiobiotin + ADP + phosphate + 3 H(+). Its pathway is cofactor biosynthesis; biotin biosynthesis; biotin from 7,8-diaminononanoate: step 1/2. Functionally, catalyzes a mechanistically unusual reaction, the ATP-dependent insertion of CO2 between the N7 and N8 nitrogen atoms of 7,8-diaminopelargonic acid (DAPA, also called 7,8-diammoniononanoate) to form a ureido ring. This Bacillus anthracis (strain A0248) protein is ATP-dependent dethiobiotin synthetase BioD.